A 205-amino-acid polypeptide reads, in one-letter code: Thymidylate kinase (205 aa).

10-17 serves as a coordination point for ATP; sequence GTEGVGKS.

The protein belongs to the thymidylate kinase family.

It carries out the reaction dTMP + ATP = dTDP + ADP. In terms of biological role, phosphorylation of dTMP to form dTDP in both de novo and salvage pathways of dTTP synthesis. The chain is Thymidylate kinase from Teredinibacter turnerae (strain ATCC 39867 / T7901).